A 799-amino-acid polypeptide reads, in one-letter code: ATP synthase subunit alpha (799 aa).

Positions 1-549 (MTDNKNHSLI…EEVSLKPTTE (549 aa)) are ATP synthase alpha chain. Residue 170-177 (GDRQTGKT) coordinates ATP. Residues 550–799 (TSEAVQIEEK…KGPSGFTYLK (250 aa)) form a unknown region.

It belongs to the ATPase alpha/beta chains family. F-type ATPases have 2 components, CF(1) - the catalytic core - and CF(0) - the membrane proton channel. CF(1) has five subunits: alpha(3), beta(3), gamma(1), delta(1), epsilon(1). CF(0) has three main subunits: a(1), b(2) and c(9-12). The alpha and beta chains form an alternating ring which encloses part of the gamma chain. CF(1) is attached to CF(0) by a central stalk formed by the gamma and epsilon chains, while a peripheral stalk is formed by the delta and b chains.

It is found in the cell membrane. It catalyses the reaction ATP + H2O + 4 H(+)(in) = ADP + phosphate + 5 H(+)(out). In terms of biological role, produces ATP from ADP in the presence of a proton gradient across the membrane. The alpha chain is a regulatory subunit. The sequence is that of ATP synthase subunit alpha (atpA) from Ureaplasma parvum serovar 3 (strain ATCC 27815 / 27 / NCTC 11736).